The chain runs to 305 residues: Guanine nucleotide-binding protein subunit beta (305 aa).

WD repeat units lie at residues asparagine 19 to aspartate 49, alanine 61 to aspartate 91, glycine 104 to aspartate 133, glycine 145 to aspartate 176, glycine 188 to aspartate 218, proline 231 to aspartate 260, and glycine 272 to serine 302.

The protein belongs to the WD repeat G protein beta family. G proteins are composed of 3 units, alpha, beta and gamma. Binding of the beta-gamma subunit complex (git5-git11) to the alpha subunit (gpa2) facilitates interaction with GPCR git3.

It is found in the cell membrane. The protein resides in the cytoplasm. Its subcellular location is the nucleus. Its function is as follows. Beta subunit of the heterotrimeric guanine nucleotide-binding protein (G protein) involved in glucose-induced cAMP signaling. The beta-gamma subunits (git5-git11) promote binding of the alpha subunit gpa2 to GPCR git3, which senses extracellular glucose, to activate cAMP-PKA signaling and repress sexual development and gluconeogenesis. The sequence is that of Guanine nucleotide-binding protein subunit beta (git5) from Schizosaccharomyces pombe (strain 972 / ATCC 24843) (Fission yeast).